Reading from the N-terminus, the 307-residue chain is Leucine-rich repeat-containing protein 59 (307 aa).

At Met1 the chain carries N-acetylmethionine. Position 2 is an N-acetylthreonine; in Leucine-rich repeat-containing protein 59, N-terminally processed (Thr2). The Cytoplasmic portion of the chain corresponds to 2 to 244; the sequence is TKTGSKGGNL…KPPPRKHNRS (243 aa). 5 LRR repeats span residues 10 to 31, 40 to 62, 63 to 84, 86 to 107, and 109 to 128; these read NLRDKLDGNELDLSLSDLNEVP, KATVLDLSCNKLSTLPSDFCGLT, HLVKLDLSKNKLQQLPADFGRL, NLQHLDLLNNRLVTLPVSFAQL, and NLKWLDLKDNPLDPVLAKVA. Phosphoserine occurs at positions 23 and 25. The residue at position 73 (Lys73) is an N6-succinyllysine. Lys135 is modified (N6-acetyllysine). Residues 148–216 adopt a coiled-coil conformation; the sequence is MKAVQADQER…KASKREQEKK (69 aa). The disordered stretch occupies residues 150 to 242; that stretch reads AVQADQERER…PRKPPPRKHN (93 aa). Residues 154–221 are compositionally biased toward basic and acidic residues; the sequence is DQERERQRRL…EQEKKPKKET (68 aa). Residues 229 to 242 are compositionally biased toward basic residues; sequence SGSRPRKPPPRKHN. Residues 245 to 265 form a helical membrane-spanning segment; it reads WAVLKGLLLLLLLCVAGGLVV. Topologically, residues 266–307 are lumenal; it reads CRVTGLQQQPLCTSVNAIYDNAVQGLRHHEILQWVLQTDSQQ.

As to quaternary structure, can form homodimers. Interacts with SGO1. Interacts with FGF1.

The protein resides in the microsome membrane. Its subcellular location is the endoplasmic reticulum membrane. It is found in the nucleus envelope. Functionally, required for nuclear import of FGF1, but not that of FGF2. Might regulate nuclear import of exogenous FGF1 by facilitating interaction with the nuclear import machinery and by transporting cytosolic FGF1 to, and possibly through, the nuclear pores. This is Leucine-rich repeat-containing protein 59 (Lrrc59) from Rattus norvegicus (Rat).